The chain runs to 94 residues: Neurotoxin 213 (94 aa).

Positions 1 to 22 are cleaved as a signal peptide; the sequence is MLKFILTCTSVILFTAVEDSSC. One can recognise an LCN-type CS-alpha/beta domain in the interval 24 to 88; that stretch reads KGGNYPISVY…YWDYHRNNCK (65 aa). 3 disulfides stabilise this stretch: Cys-39-Cys-62, Cys-48-Cys-67, and Cys-52-Cys-69.

This sequence belongs to the long (3 C-C) scorpion toxin superfamily. As to expression, expressed by the venom gland.

The protein resides in the secreted. The sequence is that of Neurotoxin 213 from Lychas mucronatus (Chinese swimming scorpion).